A 113-amino-acid polypeptide reads, in one-letter code: MSASVVSVISRFLEEYLSSTPQRLKLLDAYLLYILLTGALQFGYCLLVGTFPFNSFLSGFISCVGSFILAVCLRIQINPQNKADFQGISPERAFADFLFASTILHLVVMNFVG.

Residue S2 is modified to N-acetylserine. The Cytoplasmic portion of the chain corresponds to 2-30 (SASVVSVISRFLEEYLSSTPQRLKLLDAY). A helical membrane pass occupies residues 31-51 (LLYILLTGALQFGYCLLVGTF). A topological domain (lumenal) is located at residue P52. Residues 53–73 (FNSFLSGFISCVGSFILAVCL) traverse the membrane as a helical segment. Residues 74–92 (RIQINPQNKADFQGISPER) lie on the Cytoplasmic side of the membrane. The chain crosses the membrane as a helical span at residues 93-113 (AFADFLFASTILHLVVMNFVG).

The protein belongs to the DAD/OST2 family. In terms of assembly, component of the oligosaccharyltransferase (OST) complex. OST exists in two different complex forms which contain common core subunits RPN1, RPN2, OST48, OST4, DAD1 and TMEM258, either STT3A or STT3B as catalytic subunits, and form-specific accessory subunits. STT3A complex assembly occurs through the formation of 3 subcomplexes. Subcomplex 1 contains RPN1 and TMEM258, subcomplex 2 contains the STT3A-specific subunits STT3A, DC2/OSTC, and KCP2 as well as the core subunit OST4, and subcomplex 3 contains RPN2, DAD1, and OST48. The STT3A complex can form stable complexes with the Sec61 complex or with both the Sec61 and TRAP complexes.

The protein resides in the endoplasmic reticulum membrane. The protein operates within protein modification; protein glycosylation. Subunit of the oligosaccharyl transferase (OST) complex that catalyzes the initial transfer of a defined glycan (Glc(3)Man(9)GlcNAc(2) in eukaryotes) from the lipid carrier dolichol-pyrophosphate to an asparagine residue within an Asn-X-Ser/Thr consensus motif in nascent polypeptide chains, the first step in protein N-glycosylation. N-glycosylation occurs cotranslationally and the complex associates with the Sec61 complex at the channel-forming translocon complex that mediates protein translocation across the endoplasmic reticulum (ER). All subunits are required for a maximal enzyme activity. This is Dolichyl-diphosphooligosaccharide--protein glycosyltransferase subunit DAD1 from Mus musculus (Mouse).